The primary structure comprises 236 residues: 2-C-methyl-D-erythritol 4-phosphate cytidylyltransferase (236 aa).

Belongs to the IspD/TarI cytidylyltransferase family. IspD subfamily.

The catalysed reaction is 2-C-methyl-D-erythritol 4-phosphate + CTP + H(+) = 4-CDP-2-C-methyl-D-erythritol + diphosphate. It functions in the pathway isoprenoid biosynthesis; isopentenyl diphosphate biosynthesis via DXP pathway; isopentenyl diphosphate from 1-deoxy-D-xylulose 5-phosphate: step 2/6. Functionally, catalyzes the formation of 4-diphosphocytidyl-2-C-methyl-D-erythritol from CTP and 2-C-methyl-D-erythritol 4-phosphate (MEP). The chain is 2-C-methyl-D-erythritol 4-phosphate cytidylyltransferase from Alkaliphilus oremlandii (strain OhILAs) (Clostridium oremlandii (strain OhILAs)).